Consider the following 219-residue polypeptide: Probable GTP-binding protein EngB (219 aa).

The region spanning 26–200 (EGVEIAFAGR…RAKLDTWFAP (175 aa)) is the EngB-type G domain. Residues 34–41 (GRSNAGKS), 61–65 (GRTQL), 79–82 (DLPG), 146–149 (TKAD), and 179–181 (FSS) each bind GTP. Mg(2+)-binding residues include Ser41 and Thr63.

This sequence belongs to the TRAFAC class TrmE-Era-EngA-EngB-Septin-like GTPase superfamily. EngB GTPase family. The cofactor is Mg(2+).

In terms of biological role, necessary for normal cell division and for the maintenance of normal septation. In Vibrio parahaemolyticus serotype O3:K6 (strain RIMD 2210633), this protein is Probable GTP-binding protein EngB.